The sequence spans 270 residues: Glutamate racemase (270 aa).

Substrate contacts are provided by residues Asp15 to Ser16 and Tyr47 to Gly48. Residue Cys78 is the Proton donor/acceptor of the active site. Asn79–Thr80 contacts substrate. The active-site Proton donor/acceptor is Cys189. Position 190 to 191 (Thr190 to His191) interacts with substrate.

It belongs to the aspartate/glutamate racemases family.

It carries out the reaction L-glutamate = D-glutamate. It functions in the pathway cell wall biogenesis; peptidoglycan biosynthesis. Functionally, provides the (R)-glutamate required for cell wall biosynthesis. The chain is Glutamate racemase from Syntrophus aciditrophicus (strain SB).